The sequence spans 421 residues: Medium-chain specific acyl-CoA dehydrogenase, mitochondrial (421 aa).

A mitochondrion-targeting transit peptide spans 1–25 (MAAGFGRCCRVLRSISRFHWRSQHT). N6-acetyllysine; alternate is present on K69. K69 carries the post-translational modification N6-succinyllysine; alternate. 158-167 (YCVTEPGAGS) provides a ligand contact to FAD. S167 contacts octanoyl-CoA. K179 bears the N6-succinyllysine mark. 191-193 (WIT) contributes to the FAD binding site. N6-acetyllysine; alternate occurs at positions 212, 217, 259, and 271. K212, K217, K259, and K271 each carry N6-succinyllysine; alternate. D278 provides a ligand contact to octanoyl-CoA. N6-acetyllysine is present on K279. Octanoyl-CoA is bound at residue R281. K301 is subject to N6-acetyllysine. Residues 306-308 (RKT) and 316-317 (HQ) each bind FAD. Position 351 is a phosphothreonine (T351). Residues 374–378 (QILGG) and 401–405 (EGTSQ) contribute to the FAD site. E401 contributes to the octanoyl-CoA binding site. Catalysis depends on E401, which acts as the Proton acceptor.

The protein belongs to the acyl-CoA dehydrogenase family. Homotetramer. Interacts with the heterodimeric electron transfer flavoprotein ETF. FAD serves as cofactor. Post-translationally, acetylated. Could occur at proximity of the cofactor-binding sites and reduce the catalytic activity. Could be deacetylated by SIRT3.

Its subcellular location is the mitochondrion matrix. The catalysed reaction is a medium-chain 2,3-saturated fatty acyl-CoA + oxidized [electron-transfer flavoprotein] + H(+) = a medium-chain (2E)-enoyl-CoA + reduced [electron-transfer flavoprotein]. It catalyses the reaction pentanoyl-CoA + oxidized [electron-transfer flavoprotein] + H(+) = (2E)-pentenoyl-CoA + reduced [electron-transfer flavoprotein]. The enzyme catalyses hexanoyl-CoA + oxidized [electron-transfer flavoprotein] + H(+) = (2E)-hexenoyl-CoA + reduced [electron-transfer flavoprotein]. It carries out the reaction octanoyl-CoA + oxidized [electron-transfer flavoprotein] + H(+) = (2E)-octenoyl-CoA + reduced [electron-transfer flavoprotein]. The catalysed reaction is decanoyl-CoA + oxidized [electron-transfer flavoprotein] + H(+) = (2E)-decenoyl-CoA + reduced [electron-transfer flavoprotein]. It catalyses the reaction dodecanoyl-CoA + oxidized [electron-transfer flavoprotein] + H(+) = (2E)-dodecenoyl-CoA + reduced [electron-transfer flavoprotein]. The enzyme catalyses tetradecanoyl-CoA + oxidized [electron-transfer flavoprotein] + H(+) = (2E)-tetradecenoyl-CoA + reduced [electron-transfer flavoprotein]. It carries out the reaction oxidized [electron-transfer flavoprotein] + hexadecanoyl-CoA + H(+) = (2E)-hexadecenoyl-CoA + reduced [electron-transfer flavoprotein]. Its pathway is lipid metabolism; mitochondrial fatty acid beta-oxidation. Medium-chain specific acyl-CoA dehydrogenase is one of the acyl-CoA dehydrogenases that catalyze the first step of mitochondrial fatty acid beta-oxidation, an aerobic process breaking down fatty acids into acetyl-CoA and allowing the production of energy from fats. The first step of fatty acid beta-oxidation consists in the removal of one hydrogen from C-2 and C-3 of the straight-chain fatty acyl-CoA thioester, resulting in the formation of trans-2-enoyl-CoA. Electron transfer flavoprotein (ETF) is the electron acceptor that transfers electrons to the main mitochondrial respiratory chain via ETF-ubiquinone oxidoreductase (ETF dehydrogenase). Among the different mitochondrial acyl-CoA dehydrogenases, medium-chain specific acyl-CoA dehydrogenase acts specifically on acyl-CoAs with saturated 6 to 12 carbons long primary chains. The chain is Medium-chain specific acyl-CoA dehydrogenase, mitochondrial from Homo sapiens (Human).